A 122-amino-acid polypeptide reads, in one-letter code: Large ribosomal subunit protein bL12 (122 aa).

This sequence belongs to the bacterial ribosomal protein bL12 family. In terms of assembly, homodimer. Part of the ribosomal stalk of the 50S ribosomal subunit. Forms a multimeric L10(L12)X complex, where L10 forms an elongated spine to which 2 to 4 L12 dimers bind in a sequential fashion. Binds GTP-bound translation factors.

Forms part of the ribosomal stalk which helps the ribosome interact with GTP-bound translation factors. Is thus essential for accurate translation. The protein is Large ribosomal subunit protein bL12 of Mycoplasma pneumoniae (strain ATCC 29342 / M129 / Subtype 1) (Mycoplasmoides pneumoniae).